A 170-amino-acid chain; its full sequence is Small ribosomal subunit protein uS5 (170 aa).

Positions 16 to 79 (IEDQLVAINR…EAGKKNMISV (64 aa)) constitute an S5 DRBM domain.

It belongs to the universal ribosomal protein uS5 family. In terms of assembly, part of the 30S ribosomal subunit. Contacts proteins S4 and S8.

Its function is as follows. With S4 and S12 plays an important role in translational accuracy. In terms of biological role, located at the back of the 30S subunit body where it stabilizes the conformation of the head with respect to the body. This is Small ribosomal subunit protein uS5 from Lactobacillus delbrueckii subsp. bulgaricus (strain ATCC 11842 / DSM 20081 / BCRC 10696 / JCM 1002 / NBRC 13953 / NCIMB 11778 / NCTC 12712 / WDCM 00102 / Lb 14).